The chain runs to 339 residues: Ketol-acid reductoisomerase (NADP(+)) (339 aa).

The KARI N-terminal Rossmann domain occupies 1–182 (MRVYYDRDAD…GGGRAGIIET (182 aa)). NADP(+) is bound by residues 24–27 (YGSQ), Arg-48, Ser-51, Thr-53, and 83–86 (DELQ). Residue His-108 is part of the active site. Residue Gly-134 participates in NADP(+) binding. A KARI C-terminal knotted domain is found at 183–328 (TFKEECETDL…AELRAMMPWI (146 aa)). The Mg(2+) site is built by Asp-191, Glu-195, Glu-227, and Glu-231. Ser-252 is a binding site for substrate.

This sequence belongs to the ketol-acid reductoisomerase family. The cofactor is Mg(2+).

The enzyme catalyses (2R)-2,3-dihydroxy-3-methylbutanoate + NADP(+) = (2S)-2-acetolactate + NADPH + H(+). The catalysed reaction is (2R,3R)-2,3-dihydroxy-3-methylpentanoate + NADP(+) = (S)-2-ethyl-2-hydroxy-3-oxobutanoate + NADPH + H(+). It participates in amino-acid biosynthesis; L-isoleucine biosynthesis; L-isoleucine from 2-oxobutanoate: step 2/4. It functions in the pathway amino-acid biosynthesis; L-valine biosynthesis; L-valine from pyruvate: step 2/4. Involved in the biosynthesis of branched-chain amino acids (BCAA). Catalyzes an alkyl-migration followed by a ketol-acid reduction of (S)-2-acetolactate (S2AL) to yield (R)-2,3-dihydroxy-isovalerate. In the isomerase reaction, S2AL is rearranged via a Mg-dependent methyl migration to produce 3-hydroxy-3-methyl-2-ketobutyrate (HMKB). In the reductase reaction, this 2-ketoacid undergoes a metal-dependent reduction by NADPH to yield (R)-2,3-dihydroxy-isovalerate. The polypeptide is Ketol-acid reductoisomerase (NADP(+)) (Beijerinckia indica subsp. indica (strain ATCC 9039 / DSM 1715 / NCIMB 8712)).